The following is a 303-amino-acid chain: D-alanine--D-alanine ligase (303 aa).

The ATP-grasp domain maps to 104 to 300 (KLLWNAVGLP…FERLVERVLE (197 aa)). 132–187 (IAKLGLPLFVKPASEGSSVGVSKVKTAEQLLPAIEEALKYDSIVLVEENLAGAEYS) is an ATP binding site. Asp254, Glu267, and Asn269 together coordinate Mg(2+).

This sequence belongs to the D-alanine--D-alanine ligase family. Mg(2+) serves as cofactor. It depends on Mn(2+) as a cofactor.

It is found in the cytoplasm. It carries out the reaction 2 D-alanine + ATP = D-alanyl-D-alanine + ADP + phosphate + H(+). It participates in cell wall biogenesis; peptidoglycan biosynthesis. Cell wall formation. This is D-alanine--D-alanine ligase from Glaesserella parasuis serovar 5 (strain SH0165) (Haemophilus parasuis).